A 121-amino-acid polypeptide reads, in one-letter code: MKKSKRTDRKGSIHIQSTFNNTLITVSDAQGACVCWSSAGLVGFKGAKKGTPFAAGMAAEKVAQLAKDQGMKQVDVFVKGPGAGRETAIRALEAAGLQITSIQDVTGIPHNGCRPPKRRRV.

The protein belongs to the universal ribosomal protein uS11 family. Part of the 30S ribosomal subunit.

It is found in the plastid. The protein resides in the chloroplast. The polypeptide is Small ribosomal subunit protein uS11c (Cyanidioschyzon merolae (strain NIES-3377 / 10D) (Unicellular red alga)).